The primary structure comprises 124 residues: Small ribosomal subunit protein bS6 (124 aa).

Belongs to the bacterial ribosomal protein bS6 family.

Binds together with bS18 to 16S ribosomal RNA. This Rippkaea orientalis (strain PCC 8801 / RF-1) (Cyanothece sp. (strain PCC 8801)) protein is Small ribosomal subunit protein bS6.